Here is a 400-residue protein sequence, read N- to C-terminus: MNSEENTDSIPIDLILDILSRLPSKSIARCRCVSKLWESMIRQSYFTELFLTRSSSRPHLLIAVEQEGEWKFFSLPQPKNYLGKSSLVVAANLHLKFFEDKRPQHGCSYASSLIYFPNMTIRKKGDDHLGVICNPSTGQYGYVILPPLLDFKSVPYGKFLGFDPIDKQFKVLIPIFDFDKHQTDHHILTLGAETVGWRKIQSPLRYLPHSNGTICINGILYYLAKINYAMDKNVLVCFDVRSENFVFLRLNTYCSSTKLVNYKGKLGMINQEYVDDGGFPLKLSVWVLEDVGKEEWSTYVYTLRDDNKVDQVKYNLSVVGVTASGEIVLVKKTQTLKPFYVLYFNPDKNTLLTVEVKGLHRGLYAVHRIYAFVDHVEDLEFNIMKTTYAAKSKFSQEDRF.

In terms of domain architecture, F-box spans 4–49 (EENTDSIPIDLILDILSRLPSKSIARCRCVSKLWESMIRQSYFTEL).

The protein is Putative F-box protein At1g30920 of Arabidopsis thaliana (Mouse-ear cress).